Reading from the N-terminus, the 250-residue chain is 23S rRNA (guanosine-2'-O-)-methyltransferase RlmB (250 aa).

3 residues coordinate S-adenosyl-L-methionine: G197, I217, and M226.

Belongs to the class IV-like SAM-binding methyltransferase superfamily. RNA methyltransferase TrmH family. RlmB subfamily.

The protein localises to the cytoplasm. The enzyme catalyses guanosine(2251) in 23S rRNA + S-adenosyl-L-methionine = 2'-O-methylguanosine(2251) in 23S rRNA + S-adenosyl-L-homocysteine + H(+). Specifically methylates the ribose of guanosine 2251 in 23S rRNA. This is 23S rRNA (guanosine-2'-O-)-methyltransferase RlmB from Neisseria meningitidis serogroup B (strain ATCC BAA-335 / MC58).